Reading from the N-terminus, the 326-residue chain is MKHFLRMLIQVCLYFYCKFLWRCLKFVMRKLTGRCELQRICYNTKPGASRTMKIETSLRDSKSKLLQTSVSVHPDAIEKTIEDIMELKKINPDVNPQLGISLQACLLQIVGYRNLIADVEKLRREPYDSDNPQHEEMLLKLWKFLKPNTPLESRISKQWCEIGFQGDDPKTDFRGMGLLGLYNLQYFAERDATAAQQVLSDSLHPKCSKFSKAEWEKKRMDKAIGYSFAIVGINITDLAYNLLVSGALKTHFYNIAPEAPTLSHFQQTFCYLMHEFHKFWIEEDPMDIMEFNRVREKFRKRIIKQLQNPDMALCPHFAASEGLINM.

Residues 133-306 (QHEEMLLKLW…KFRKRIIKQL (174 aa)) enclose the ELMO domain.

Acts as a GTPase-activating protein (GAP) toward guanine nucleotide exchange factors like ARL2, ARL3, ARF1 and ARF6, but not for GTPases outside the Arf family. This is ELMO domain-containing protein 1 (ELMOD1) from Pongo abelii (Sumatran orangutan).